Reading from the N-terminus, the 456-residue chain is ATP synthase subunit beta 1 (456 aa).

Residue 152–159 (GGAGVGKS) participates in ATP binding.

The protein belongs to the ATPase alpha/beta chains family. F-type ATPases have 2 components, CF(1) - the catalytic core - and CF(0) - the membrane proton channel. CF(1) has five subunits: alpha(3), beta(3), gamma(1), delta(1), epsilon(1). CF(0) has three main subunits: a(1), b(2) and c(9-12). The alpha and beta chains form an alternating ring which encloses part of the gamma chain. CF(1) is attached to CF(0) by a central stalk formed by the gamma and epsilon chains, while a peripheral stalk is formed by the delta and b chains.

The protein resides in the cell membrane. It carries out the reaction ATP + H2O + 4 H(+)(in) = ADP + phosphate + 5 H(+)(out). In terms of biological role, produces ATP from ADP in the presence of a proton gradient across the membrane. The catalytic sites are hosted primarily by the beta subunits. This chain is ATP synthase subunit beta 1, found in Listeria welshimeri serovar 6b (strain ATCC 35897 / DSM 20650 / CCUG 15529 / CIP 8149 / NCTC 11857 / SLCC 5334 / V8).